A 435-amino-acid chain; its full sequence is Citrate synthase (435 aa).

Residues H311 and D370 contribute to the active site.

The protein belongs to the citrate synthase family.

It carries out the reaction oxaloacetate + acetyl-CoA + H2O = citrate + CoA + H(+). Its pathway is carbohydrate metabolism; tricarboxylic acid cycle; isocitrate from oxaloacetate: step 1/2. This chain is Citrate synthase (gltA), found in Rickettsia bellii (strain RML369-C).